The chain runs to 276 residues: Probable endonuclease 4 (276 aa).

Zn(2+)-binding residues include His70, His108, Glu143, Asp176, His179, His210, Asp223, His225, and Glu255.

The protein belongs to the AP endonuclease 2 family. It depends on Zn(2+) as a cofactor.

The enzyme catalyses Endonucleolytic cleavage to 5'-phosphooligonucleotide end-products.. Functionally, endonuclease IV plays a role in DNA repair. It cleaves phosphodiester bonds at apurinic or apyrimidinic (AP) sites, generating a 3'-hydroxyl group and a 5'-terminal sugar phosphate. The chain is Probable endonuclease 4 from Mesomycoplasma hyopneumoniae (strain 7448) (Mycoplasma hyopneumoniae).